The chain runs to 133 residues: Small ribosomal subunit protein uS12c (133 aa).

This sequence belongs to the universal ribosomal protein uS12 family. As to quaternary structure, part of the 30S ribosomal subunit.

Its subcellular location is the plastid. It is found in the chloroplast. Its function is as follows. With S4 and S5 plays an important role in translational accuracy. Located at the interface of the 30S and 50S subunits. In Chlamydomonas reinhardtii (Chlamydomonas smithii), this protein is Small ribosomal subunit protein uS12c (rps12).